A 1375-amino-acid polypeptide reads, in one-letter code: DNA-directed RNA polymerase subunit beta (1375 aa).

It belongs to the RNA polymerase beta chain family. In terms of assembly, the RNAP catalytic core consists of 2 alpha, 1 beta, 1 beta' and 1 omega subunit. When a sigma factor is associated with the core the holoenzyme is formed, which can initiate transcription.

The enzyme catalyses RNA(n) + a ribonucleoside 5'-triphosphate = RNA(n+1) + diphosphate. DNA-dependent RNA polymerase catalyzes the transcription of DNA into RNA using the four ribonucleoside triphosphates as substrates. The polypeptide is DNA-directed RNA polymerase subunit beta (Malacoplasma penetrans (strain HF-2) (Mycoplasma penetrans)).